The chain runs to 215 residues: Disulfide-bond oxidoreductase YfcG (215 aa).

The GST N-terminal domain maps to 1 to 87 (MIDLYFAPTP…YLAEKTGLFL (87 aa)). Glutathione-binding positions include Asn-11, Gln-38, Arg-40, Ile-52, 71–72 (ES), and Arg-132. Residues 90–215 (ETRERAATLQ…AQLGDERSDS (126 aa)) form the GST C-terminal domain.

The protein belongs to the GST superfamily. Nu-class GSH transferase family. In terms of assembly, homodimer.

Exhibits a very robust glutathione (GSH)-dependent disulfide-bond reductase activity toward the model substrate, 2-hydroxyethyl disulfide; the actual physiological substrates are not known. Also has a low GSH-dependent hydroperoxidase activity toward cumene hydroperoxide, but does not reduce H(2)O(2), tert-butyl hydroperoxide, benzyl peroxide, or lauroyl peroxide. Exhibits little or no GSH transferase activity with most typical electrophilic substrates, and has no detectable transferase activity using glutathionylspermidine (GspSH) as the nucleophilic substrate. Is involved in defense against oxidative stress, probably via its peroxidase activity. The chain is Disulfide-bond oxidoreductase YfcG (yfcG) from Escherichia coli (strain K12).